Reading from the N-terminus, the 236-residue chain is Leucyl/phenylalanyl-tRNA--protein transferase (236 aa).

The protein belongs to the L/F-transferase family.

The protein resides in the cytoplasm. It carries out the reaction N-terminal L-lysyl-[protein] + L-leucyl-tRNA(Leu) = N-terminal L-leucyl-L-lysyl-[protein] + tRNA(Leu) + H(+). The enzyme catalyses N-terminal L-arginyl-[protein] + L-leucyl-tRNA(Leu) = N-terminal L-leucyl-L-arginyl-[protein] + tRNA(Leu) + H(+). The catalysed reaction is L-phenylalanyl-tRNA(Phe) + an N-terminal L-alpha-aminoacyl-[protein] = an N-terminal L-phenylalanyl-L-alpha-aminoacyl-[protein] + tRNA(Phe). Its function is as follows. Functions in the N-end rule pathway of protein degradation where it conjugates Leu, Phe and, less efficiently, Met from aminoacyl-tRNAs to the N-termini of proteins containing an N-terminal arginine or lysine. This chain is Leucyl/phenylalanyl-tRNA--protein transferase, found in Shewanella sp. (strain MR-4).